Here is a 188-residue protein sequence, read N- to C-terminus: Elongation factor P (188 aa).

This sequence belongs to the elongation factor P family.

The protein localises to the cytoplasm. It participates in protein biosynthesis; polypeptide chain elongation. Functionally, involved in peptide bond synthesis. Stimulates efficient translation and peptide-bond synthesis on native or reconstituted 70S ribosomes in vitro. Probably functions indirectly by altering the affinity of the ribosome for aminoacyl-tRNA, thus increasing their reactivity as acceptors for peptidyl transferase. In Wolbachia sp. subsp. Brugia malayi (strain TRS), this protein is Elongation factor P.